Reading from the N-terminus, the 205-residue chain is Ribosomal RNA large subunit methyltransferase E (205 aa).

Positions 60, 62, 80, 96, and 121 each coordinate S-adenosyl-L-methionine. Catalysis depends on Lys-161, which acts as the Proton acceptor.

The protein belongs to the class I-like SAM-binding methyltransferase superfamily. RNA methyltransferase RlmE family.

Its subcellular location is the cytoplasm. The catalysed reaction is uridine(2552) in 23S rRNA + S-adenosyl-L-methionine = 2'-O-methyluridine(2552) in 23S rRNA + S-adenosyl-L-homocysteine + H(+). In terms of biological role, specifically methylates the uridine in position 2552 of 23S rRNA at the 2'-O position of the ribose in the fully assembled 50S ribosomal subunit. This Dechloromonas aromatica (strain RCB) protein is Ribosomal RNA large subunit methyltransferase E.